We begin with the raw amino-acid sequence, 231 residues long: Lipid A acyltransferase PagP (231 aa).

A signal peptide spans 1 to 23; the sequence is MNKLTVRNFIVGLLIVFSLNSFS. Low complexity predominate over residues 24-43; that stretch reads SPPSISNSSSNSIDENSPIN. The disordered stretch occupies residues 24–59; it reads SPPSISNSSSNSIDENSPINTFKISPDNQTSKKSDL. Active-site residues include histidine 100, aspartate 145, and serine 146.

The protein belongs to the lipid A palmitoyltransferase family. As to quaternary structure, homodimer.

It is found in the cell outer membrane. It carries out the reaction a lipid A + a 1,2-diacyl-sn-glycero-3-phosphocholine = a hepta-acyl lipid A + a 2-acyl-sn-glycero-3-phosphocholine. The enzyme catalyses a lipid IVA + a 1,2-diacyl-sn-glycero-3-phosphocholine = a lipid IVB + a 2-acyl-sn-glycero-3-phosphocholine. The catalysed reaction is a lipid IIA + a 1,2-diacyl-sn-glycero-3-phosphocholine = a lipid IIB + a 2-acyl-sn-glycero-3-phosphocholine. Its function is as follows. Transfers a fatty acid residue from the sn-1 position of a phospholipid to the N-linked hydroxyfatty acid chain on the proximal unit of lipid A or its precursors. This chain is Lipid A acyltransferase PagP, found in Legionella longbeachae serogroup 1 (strain NSW150).